The sequence spans 89 residues: Small ribosomal subunit protein uS15 (89 aa).

It belongs to the universal ribosomal protein uS15 family. As to quaternary structure, part of the 30S ribosomal subunit. Forms a bridge to the 50S subunit in the 70S ribosome, contacting the 23S rRNA.

In terms of biological role, one of the primary rRNA binding proteins, it binds directly to 16S rRNA where it helps nucleate assembly of the platform of the 30S subunit by binding and bridging several RNA helices of the 16S rRNA. Its function is as follows. Forms an intersubunit bridge (bridge B4) with the 23S rRNA of the 50S subunit in the ribosome. This Roseiflexus castenholzii (strain DSM 13941 / HLO8) protein is Small ribosomal subunit protein uS15.